Reading from the N-terminus, the 233-residue chain is MSEAKKLLAQGLWKNNSALVQLLGLCPLLAVSSTATNALGLGLATTLVLVCTNTAVSALRRWVPSEIRIPIYVMIIASVVSTVQMLINAYAFGLYQSLGIFIPLIVTNCIVIGRAEAYAAKNPVGLSALDGFAMGMGATCALFVLGALREILGNGTLFDGADMLLGSWATVLRIDILHLDTPFLLAMLPPGAFIGLGLLLAGKYVIDEKMKARKANTRVSVPQLQDGDAEKAL.

Transmembrane regions (helical) follow at residues 18-38 (ALVQ…ATNA), 39-59 (LGLG…VSAL), 69-89 (IPIY…LINA), 92-112 (FGLY…CIVI), 128-148 (ALDG…LGAL), and 182-202 (PFLL…LLAG).

This sequence belongs to the NqrDE/RnfAE family. As to quaternary structure, the complex is composed of six subunits: RnfA, RnfB, RnfC, RnfD, RnfE and RnfG.

It localises to the cell inner membrane. Functionally, part of a membrane-bound complex that couples electron transfer with translocation of ions across the membrane. The sequence is that of Ion-translocating oxidoreductase complex subunit E from Yersinia pseudotuberculosis serotype O:3 (strain YPIII).